A 404-amino-acid chain; its full sequence is NADH-quinone oxidoreductase subunit D 2 (404 aa).

The protein belongs to the complex I 49 kDa subunit family. NDH-1 is composed of 14 different subunits. Subunits NuoB, C, D, E, F, and G constitute the peripheral sector of the complex.

It localises to the cell inner membrane. The catalysed reaction is a quinone + NADH + 5 H(+)(in) = a quinol + NAD(+) + 4 H(+)(out). In terms of biological role, NDH-1 shuttles electrons from NADH, via FMN and iron-sulfur (Fe-S) centers, to quinones in the respiratory chain. The immediate electron acceptor for the enzyme in this species is believed to be ubiquinone. Couples the redox reaction to proton translocation (for every two electrons transferred, four hydrogen ions are translocated across the cytoplasmic membrane), and thus conserves the redox energy in a proton gradient. In Sinorhizobium medicae (strain WSM419) (Ensifer medicae), this protein is NADH-quinone oxidoreductase subunit D 2.